The primary structure comprises 129 residues: Glycine cleavage system H protein (129 aa).

Positions T24–K106 constitute a Lipoyl-binding domain. The residue at position 65 (K65) is an N6-lipoyllysine.

This sequence belongs to the GcvH family. In terms of assembly, the glycine cleavage system is composed of four proteins: P, T, L and H. The cofactor is (R)-lipoate.

Its function is as follows. The glycine cleavage system catalyzes the degradation of glycine. The H protein shuttles the methylamine group of glycine from the P protein to the T protein. The polypeptide is Glycine cleavage system H protein (Salmonella choleraesuis (strain SC-B67)).